We begin with the raw amino-acid sequence, 300 residues long: Haloalkane dehalogenase (300 aa).

The AB hydrolase-1 domain occupies 32-155 (AIVFQHGNPT…PAVRGVFQGF (124 aa)). The Nucleophile role is filled by D109. The active-site Proton donor is the E133. H273 acts as the Proton acceptor in catalysis.

This sequence belongs to the haloalkane dehalogenase family. Type 2 subfamily. Monomer.

The enzyme catalyses 1-haloalkane + H2O = a halide anion + a primary alcohol + H(+). Its function is as follows. Catalyzes hydrolytic cleavage of carbon-halogen bonds in halogenated aliphatic compounds, leading to the formation of the corresponding primary alcohols, halide ions and protons. The protein is Haloalkane dehalogenase of Mycobacterium bovis (strain ATCC BAA-935 / AF2122/97).